The chain runs to 96 residues: Aspartyl/glutamyl-tRNA(Asn/Gln) amidotransferase subunit C (96 aa).

The protein belongs to the GatC family. In terms of assembly, heterotrimer of A, B and C subunits.

The catalysed reaction is L-glutamyl-tRNA(Gln) + L-glutamine + ATP + H2O = L-glutaminyl-tRNA(Gln) + L-glutamate + ADP + phosphate + H(+). The enzyme catalyses L-aspartyl-tRNA(Asn) + L-glutamine + ATP + H2O = L-asparaginyl-tRNA(Asn) + L-glutamate + ADP + phosphate + 2 H(+). Functionally, allows the formation of correctly charged Asn-tRNA(Asn) or Gln-tRNA(Gln) through the transamidation of misacylated Asp-tRNA(Asn) or Glu-tRNA(Gln) in organisms which lack either or both of asparaginyl-tRNA or glutaminyl-tRNA synthetases. The reaction takes place in the presence of glutamine and ATP through an activated phospho-Asp-tRNA(Asn) or phospho-Glu-tRNA(Gln). The protein is Aspartyl/glutamyl-tRNA(Asn/Gln) amidotransferase subunit C of Deinococcus deserti (strain DSM 17065 / CIP 109153 / LMG 22923 / VCD115).